A 1230-amino-acid polypeptide reads, in one-letter code: ATP-dependent helicase/nuclease subunit A (1230 aa).

The 477-residue stretch at 4 to 480 folds into the UvrD-like helicase ATP-binding domain; it reads RNWTGPQEAA…IDLSHNFRSR (477 aa). 25–32 serves as a coordination point for ATP; sequence AGAGSGKT. The 283-residue stretch at 517–799 folds into the UvrD-like helicase C-terminal domain; that stretch reads AQLEGSGPPV…RIMSIHQAKG (283 aa). The interval 535–554 is disordered; the sequence is TSVGRDTAGTADDEPDRSDE. Residues 545-554 are compositionally biased toward acidic residues; it reads ADDEPDRSDE.

The protein belongs to the helicase family. AddA subfamily. Heterodimer of AddA and AddB/RexB. Requires Mg(2+) as cofactor.

It carries out the reaction Couples ATP hydrolysis with the unwinding of duplex DNA by translocating in the 3'-5' direction.. The catalysed reaction is ATP + H2O = ADP + phosphate + H(+). In terms of biological role, the heterodimer acts as both an ATP-dependent DNA helicase and an ATP-dependent, dual-direction single-stranded exonuclease. Recognizes the chi site generating a DNA molecule suitable for the initiation of homologous recombination. The AddA nuclease domain is required for chi fragment generation; this subunit has the helicase and 3' -&gt; 5' nuclease activities. In Desulforudis audaxviator (strain MP104C), this protein is ATP-dependent helicase/nuclease subunit A.